A 636-amino-acid chain; its full sequence is ABC transporter ATP-binding protein RamA (636 aa).

5 helical membrane passes run 45–65 (VLVL…PLAL), 78–98 (AGWW…LDSA), 175–195 (LVDV…ALLL), 269–289 (GVLV…RLAA), and 297–317 (LLAV…ASLL). In terms of domain architecture, ABC transmembrane type-1 spans 45-322 (VLVLLCSVAA…AASLLGAIVR (278 aa)). An ABC transporter domain is found at 354-585 (LRLCGVRVLR…AGYREVFGAG (232 aa)). 386-393 (GRSGAGKS) provides a ligand contact to ATP. The span at 589 to 606 (GAGAGAGAGADAGAGADA) shows a compositional bias: gly residues. Positions 589 to 636 (GAGAGAGAGADAGAGADAGPGPDSGAATAVGGSGPGPVRRPEPEEARP) are disordered. The span at 607-618 (GPGPDSGAATAV) shows a compositional bias: low complexity. Residues 627-636 (RRPEPEEARP) show a composition bias toward basic and acidic residues.

Belongs to the ABC transporter superfamily.

It is found in the cell membrane. Its function is as follows. Probably involved in exporting SapB from the cell. Expression of the ram locus (ramA, ramB and ramR) induces rapid aerial mycelium formation in S.lividans. This Streptomyces coelicolor (strain ATCC BAA-471 / A3(2) / M145) protein is ABC transporter ATP-binding protein RamA.